A 1538-amino-acid chain; its full sequence is Arf-GAP with Rho-GAP domain, ANK repeat and PH domain-containing protein 3 (1538 aa).

The 65-residue stretch at proline 4 to glutamate 68 folds into the SAM domain. Disordered regions lie at residues aspartate 72–lysine 97, serine 125–asparagine 149, and alanine 215–glycine 242. Residues threonine 82–lysine 97 show a composition bias toward pro residues. Residues serine 216 to alanine 241 show a composition bias toward basic and acidic residues. PH domains are found at residues valine 282–lysine 374 and arginine 389–threonine 478. The region spanning glutamate 479–proline 606 is the Arf-GAP domain. PH domains lie at alanine 671 to leucine 785 and leucine 795 to glycine 901. The Rho-GAP domain occupies threonine 903–phenylalanine 1084. Positions glycine 1113–methionine 1206 constitute a Ras-associating domain. The PH 5 domain maps to glutamate 1219 to histidine 1321. Threonine 1344 carries the post-translational modification Phosphothreonine. Residues tyrosine 1399 and tyrosine 1404 each carry the phosphotyrosine modification. A compositionally biased stretch (polar residues) spans tryptophan 1425 to phenylalanine 1439. The interval tryptophan 1425–threonine 1538 is disordered. Phosphoserine is present on residues serine 1438 and serine 1474. Low complexity-rich tracts occupy residues glutamate 1476–leucine 1486 and alanine 1494–serine 1505. A compositionally biased stretch (pro residues) spans proline 1506 to serine 1529.

In terms of assembly, interacts (via SAM domain) with INPPL1/SHIP2. Tyrosine phosphorylated at a low basal level. PDGF treatment stimulates phosphorylation. Tyrosine phosphorylation is increased in cells that are in the process of becoming attached to a substrate and that start spreading and flattening.

It localises to the cytoplasm. The protein localises to the cell membrane. The protein resides in the cytoskeleton. It is found in the cell projection. Its subcellular location is the lamellipodium. It localises to the ruffle. Functionally, phosphatidylinositol 3,4,5-trisphosphate-dependent GTPase-activating protein that modulates actin cytoskeleton remodeling by regulating ARF and RHO family members. Is activated by phosphatidylinositol 3,4,5-trisphosphate (PtdIns(3,4,5)P3) binding. Can be activated by phosphatidylinositol 3,4-bisphosphate (PtdIns(3,4,5)P2) binding, albeit with lower efficiency. Acts preferentially on ARF5 and on RHOA. The protein is Arf-GAP with Rho-GAP domain, ANK repeat and PH domain-containing protein 3 (Arap3) of Mus musculus (Mouse).